The primary structure comprises 137 residues: Small ribosomal subunit protein eS19 (137 aa).

This sequence belongs to the eukaryotic ribosomal protein eS19 family. In terms of assembly, component of the small ribosomal subunit.

Its subcellular location is the cytoplasm. The protein is Small ribosomal subunit protein eS19 (RPS19) of Encephalitozoon cuniculi (strain GB-M1) (Microsporidian parasite).